Here is a 769-residue protein sequence, read N- to C-terminus: Integrin beta-8 (769 aa).

A signal peptide spans 1 to 42 (MCGSALAFFTAAFVCLQNDRRGPASFLWAAWVFSLVLGLGQG). Residues 43–684 (EDNRCASSNA…ECFSSPSYLR (642 aa)) lie on the Extracellular side of the membrane. A PSI domain is found at 46 to 95 (RCASSNAASCARCLALGPECGWCVQEDFISGGSRSERCDIVSNLISKGCS). Intrachain disulfides connect Cys47/Cys65, Cys55/Cys469, Cys58/Cys83, Cys68/Cys94, Cys211/Cys218, Cys266/Cys307, Cys407/Cys419, Cys439/Cys467, Cys471/Cys491, Cys471/Cys494, Cys481/Cys494, Cys499/Cys528, Cys511/Cys526, Cys520/Cys531, Cys533/Cys546, Cys553/Cys567, Cys561/Cys572, Cys574/Cys583, Cys585/Cys609, Cys593/Cys607, Cys601/Cys612, Cys614/Cys624, Cys627/Cys630, Cys634/Cys661, and Cys640/Cys657. In terms of domain architecture, VWFA spans 146 to 384 (PVDLYYLVDV…NLVVEAYQKL (239 aa)). Mg(2+)-binding residues include Asp154 and Ser156. Asp193 provides a ligand contact to Ca(2+). N-linked (GlcNAc...) asparagine glycosylation is present at Asn233. Ca(2+)-binding residues include Asn249, Asp251, Pro253, and Glu254. Glu254 provides a ligand contact to Mg(2+). The N-linked (GlcNAc...) asparagine glycan is linked to Asn402. Asn421, Asn431, Asn456, and Asn466 each carry an N-linked (GlcNAc...) asparagine glycan. I-EGF domains are found at residues 471-495 (CEDNRGPKGKCVDETFLDSKCFQCD), 499-547 (CHFD…KYCE), 548-584 (KDDFSCPYHHGNLCAGHGECEAGRCQCFSGWEGDRCQ), and 585-625 (CPSA…RFCE). Asn648 carries an N-linked (GlcNAc...) asparagine glycan. The chain crosses the membrane as a helical span at residues 685–704 (IFFIIFIVTFLIGLLKVLII). Residues 705–769 (RQVILQWNSN…NAHETFRCNF (65 aa)) lie on the Cytoplasmic side of the membrane.

The protein belongs to the integrin beta chain family. As to quaternary structure, heterodimer of an alpha and a beta subunit. Beta-8 (ITGB8) associates with alpha-V (ITGAV) to form ITGAV:ITGB8. ITGAV:ITGB8 interacts with TGFB1. In terms of tissue distribution, placenta, kidney, brain, ovary, uterus and in several transformed cells. Transiently expressed in 293 human embryonic kidney cells.

It is found in the cell membrane. Functionally, integrin alpha-V:beta-8 (ITGAV:ITGB8) is a receptor for fibronectin. It recognizes the sequence R-G-D in its ligands. Integrin alpha-V:beta-6 (ITGAV:ITGB6) mediates R-G-D-dependent release of transforming growth factor beta-1 (TGF-beta-1) from regulatory Latency-associated peptide (LAP), thereby playing a key role in TGF-beta-1 activation on the surface of activated regulatory T-cells (Tregs). Required during vasculogenesis. This Homo sapiens (Human) protein is Integrin beta-8.